We begin with the raw amino-acid sequence, 319 residues long: Cytochrome f (319 aa).

Residues 1 to 34 (MQNRNTYEWTKKMTRLISVLVMIHIITRTSISNA) form the signal peptide. Heme is bound by residues Tyr-35, Cys-55, Cys-58, and His-59. Residues 285-305 (VKGLLLFLASVILAQIFLVLK) traverse the membrane as a helical segment.

This sequence belongs to the cytochrome f family. In terms of assembly, the 4 large subunits of the cytochrome b6-f complex are cytochrome b6, subunit IV (17 kDa polypeptide, petD), cytochrome f and the Rieske protein, while the 4 small subunits are PetG, PetL, PetM and PetN. The complex functions as a dimer. Requires heme as cofactor.

It is found in the plastid. It localises to the chloroplast thylakoid membrane. Functionally, component of the cytochrome b6-f complex, which mediates electron transfer between photosystem II (PSII) and photosystem I (PSI), cyclic electron flow around PSI, and state transitions. In Pinus koraiensis (Korean pine), this protein is Cytochrome f.